The sequence spans 408 residues: Putative transporter AmpG 2 (408 aa).

12 helical membrane passes run 10–30, 49–69, 84–104, 109–129, 154–174, 177–197, 224–244, 261–281, 294–311, 315–337, 353–373, and 378–398; these read YISN…IYLL, IGLF…GPLL, YCLI…TNFN, FIPF…YDML, FRIG…IISW, VYRS…IYPL, WLII…LSIM, LGYK…GGFL, ALIY…LYFY, ITSL…SPFF, IALI…ISGY, and LGWT…YILI.

Belongs to the major facilitator superfamily.

Its subcellular location is the cell inner membrane. This is Putative transporter AmpG 2 (ampG2) from Rickettsia felis (strain ATCC VR-1525 / URRWXCal2) (Rickettsia azadi).